We begin with the raw amino-acid sequence, 300 residues long: N-acetylmannosamine kinase (300 aa).

Residues 5-12 (ALDIGGTK) and 132-139 (GVGGGIVL) contribute to the ATP site. Residues histidine 156, cysteine 166, cysteine 168, and cysteine 173 each contribute to the Zn(2+) site.

Belongs to the ROK (NagC/XylR) family. NanK subfamily. In terms of assembly, homodimer.

It carries out the reaction an N-acyl-D-mannosamine + ATP = an N-acyl-D-mannosamine 6-phosphate + ADP + H(+). It participates in amino-sugar metabolism; N-acetylneuraminate degradation; D-fructose 6-phosphate from N-acetylneuraminate: step 2/5. Functionally, catalyzes the phosphorylation of N-acetylmannosamine (ManNAc) to ManNAc-6-P. The chain is N-acetylmannosamine kinase from Haemophilus influenzae (strain PittEE).